We begin with the raw amino-acid sequence, 160 residues long: Small ribosomal subunit protein uS7 (160 aa).

It belongs to the universal ribosomal protein uS7 family. In terms of assembly, part of the 30S ribosomal subunit. Contacts proteins S9 and S11.

In terms of biological role, one of the primary rRNA binding proteins, it binds directly to 16S rRNA where it nucleates assembly of the head domain of the 30S subunit. Is located at the subunit interface close to the decoding center, probably blocks exit of the E-site tRNA. The polypeptide is Small ribosomal subunit protein uS7 (Anaplasma marginale (strain Florida)).